The primary structure comprises 328 residues: MSSVSTSGSGAPKSSFSFGRIWDQYGMLVVFAVLFIACAIFVPNFATFINMKGLGLAISMSGMVACGMLFCLASGDFDLSVASVIACAGVTTAVVINLTESLWIGVAAGLLLGVLCGLVNGFVIAKLKINALITTLATMQIVRGLAYIISDGKAVGIEDESFFALGYANWFGLPAPIWLTVACLIIFGLLLNKTTFGRNTLAIGGNEEAARLAGVPVVRTKIIIFVLSGLVSAIAGIILASRMTSGQPMTSIGYELIVISACVLGGVSLKGGIGKISYVVAGILILGTVENAMNLLNISPFAQYVVRGLILLAAVIFDRYKQKAKRTV.

10 consecutive transmembrane segments (helical) span residues 29–49, 53–73, 79–99, 104–124, 129–149, 171–191, 220–240, 249–269, 276–296, and 297–317; these read VVFA…ATFI, GLGL…FCLA, LSVA…INLT, IGVA…GFVI, INAL…AYII, FGLP…GLLL, TKII…IILA, MTSI…GVSL, ISYV…MNLL, and NISP…AVIF.

It belongs to the binding-protein-dependent transport system permease family. AraH/RbsC subfamily.

It localises to the cell inner membrane. Its function is as follows. Part of the binding-protein-dependent transport system for L-arabinose. Probably responsible for the translocation of the substrate across the membrane. The chain is L-arabinose transport system permease protein AraH (araH) from Escherichia coli (strain K12).